The following is a 361-amino-acid chain: Chorismate synthase (361 aa).

An NADP(+)-binding site is contributed by Arg48. Residues 125–127, 238–239, Gly278, 293–297, and Arg319 each bind FMN; these read RSS, NA, and KPTSS.

This sequence belongs to the chorismate synthase family. In terms of assembly, homotetramer. FMNH2 serves as cofactor.

The catalysed reaction is 5-O-(1-carboxyvinyl)-3-phosphoshikimate = chorismate + phosphate. Its pathway is metabolic intermediate biosynthesis; chorismate biosynthesis; chorismate from D-erythrose 4-phosphate and phosphoenolpyruvate: step 7/7. In terms of biological role, catalyzes the anti-1,4-elimination of the C-3 phosphate and the C-6 proR hydrogen from 5-enolpyruvylshikimate-3-phosphate (EPSP) to yield chorismate, which is the branch point compound that serves as the starting substrate for the three terminal pathways of aromatic amino acid biosynthesis. This reaction introduces a second double bond into the aromatic ring system. The protein is Chorismate synthase of Aliivibrio fischeri (strain ATCC 700601 / ES114) (Vibrio fischeri).